A 225-amino-acid chain; its full sequence is DNA repair protein RecO (225 aa).

It belongs to the RecO family.

Functionally, involved in DNA repair and RecF pathway recombination. The chain is DNA repair protein RecO from Clostridium perfringens (strain ATCC 13124 / DSM 756 / JCM 1290 / NCIMB 6125 / NCTC 8237 / Type A).